An 83-amino-acid chain; its full sequence is Small ribosomal subunit protein bS20 (83 aa).

Residues 1–11 (MANHKSAAKRA) show a composition bias toward basic residues. The tract at residues 1-44 (MANHKSAAKRAKQSEARRLRNKSTRSSMNTAVKKVRTAKEAGTD) is disordered.

This sequence belongs to the bacterial ribosomal protein bS20 family.

Its function is as follows. Binds directly to 16S ribosomal RNA. This Desulforapulum autotrophicum (strain ATCC 43914 / DSM 3382 / VKM B-1955 / HRM2) (Desulfobacterium autotrophicum) protein is Small ribosomal subunit protein bS20.